The chain runs to 423 residues: MSFQIPRGTQDILPEQAAKWQYIEHIARELCRRYNYQEIRTPIFEHTELFLRGVGDTTDIVQKEMYTFEDRGGRSLTLRPEGTAAVVRSFVENKMYGDPNQPVKLYYMGPMFRYERPQAGRFRQFVQFGVEALGSNDPAIDAEVIALAMDIYRMLGLKKLKLVINSLGDVESRKAHRQALIDHFQPRIHEFCDDCQARLHKNPMRILDCKKDRDHELMRTAPSILDYLNEQSRTYFEKVQMYLQKLGIAFEVDSRLVRGLDYYNHTAFEIMSEAEGFGAITTLCGGGRYNGLVQEIGGPETPGIGFALSIERLLAALEAEGISLPISEGIDCYVVALGEQAKEEAVALVAALRKEGISAEKDYQDRKVKAQLKAADRLHATYVAILGEDELQKGVINVKHMATGEQQEVSLHTFISHMKHVLQ.

This sequence belongs to the class-II aminoacyl-tRNA synthetase family. Homodimer.

The protein resides in the cytoplasm. The catalysed reaction is tRNA(His) + L-histidine + ATP = L-histidyl-tRNA(His) + AMP + diphosphate + H(+). The protein is Histidine--tRNA ligase of Anoxybacillus flavithermus (strain DSM 21510 / WK1).